The primary structure comprises 370 residues: Pyruvate dehydrogenase E1 component subunit alpha (370 aa).

Heterodimer of an alpha and a beta chain. Thiamine diphosphate is required as a cofactor.

The enzyme catalyses N(6)-[(R)-lipoyl]-L-lysyl-[protein] + pyruvate + H(+) = N(6)-[(R)-S(8)-acetyldihydrolipoyl]-L-lysyl-[protein] + CO2. Functionally, the pyruvate dehydrogenase complex catalyzes the overall conversion of pyruvate to acetyl-CoA and CO(2). It contains multiple copies of three enzymatic components: pyruvate dehydrogenase (E1), dihydrolipoamide acetyltransferase (E2) and lipoamide dehydrogenase (E3). The sequence is that of Pyruvate dehydrogenase E1 component subunit alpha (pdhA) from Staphylococcus aureus (strain COL).